The sequence spans 127 residues: Fluoride-specific ion channel FluC (127 aa).

The next 4 membrane-spanning stretches (helical) occupy residues 4–24 (LLLV…VGVG), 36–56 (GTFT…SWLA), 72–92 (VGVL…ALMI), and 101–121 (FTYS…GLLV). Residues glycine 76 and threonine 79 each contribute to the Na(+) site.

Belongs to the fluoride channel Fluc/FEX (TC 1.A.43) family.

Its subcellular location is the cell inner membrane. The enzyme catalyses fluoride(in) = fluoride(out). Na(+) is not transported, but it plays an essential structural role and its presence is essential for fluoride channel function. Its function is as follows. Fluoride-specific ion channel. Important for reducing fluoride concentration in the cell, thus reducing its toxicity. This is Fluoride-specific ion channel FluC from Caulobacter vibrioides (strain ATCC 19089 / CIP 103742 / CB 15) (Caulobacter crescentus).